We begin with the raw amino-acid sequence, 53 residues long: Metallothionein (53 aa).

Positions 1 to 6 (MRVIRM) are excised as a propeptide. 9 residues coordinate Cu(+): Cys-17, His-19, Cys-22, Cys-24, Cys-32, His-33, Cys-34, Cys-43, and Cys-45.

The protein belongs to the metallothionein superfamily.

In terms of biological role, metallothioneins are small proteins that have a high content of cysteine residues which allow them to bind heavy metal ions through clusters of thiolate bonds. MymT binds up to seven ions of Cu(+), with a preference for four to six Cu(+) ions, in a solvent-shielded core. MymT protects M.tuberculosis from copper toxicity. The protein is Metallothionein (mymT) of Mycobacterium tuberculosis (strain CDC 1551 / Oshkosh).